Reading from the N-terminus, the 251-residue chain is HTH-type transcriptional regulator UlaR (251 aa).

Residues 3 to 58 form the HTH deoR-type domain; the sequence is EAQRHQILLDMLAQLGFVTVENVIERLGISPATARRDINKLDESGKLKKVRNGAEA. The H-T-H motif DNA-binding region spans 20-39; the sequence is VTVENVIERLGISPATARRD.

The protein localises to the cytoplasm. Its function is as follows. Represses ulaG and the ulaABCDEF operon. This is HTH-type transcriptional regulator UlaR from Salmonella agona (strain SL483).